Consider the following 599-residue polypeptide: Elongation factor 4 (599 aa).

Residues 4–186 enclose the tr-type G domain; that stretch reads EHIRNFSIIA…EIVKKIPPPK (183 aa). Residues 16–21 and 133–136 each bind GTP; these read DHGKST and NKID.

Belongs to the TRAFAC class translation factor GTPase superfamily. Classic translation factor GTPase family. LepA subfamily.

The protein resides in the cell inner membrane. It catalyses the reaction GTP + H2O = GDP + phosphate + H(+). In terms of biological role, required for accurate and efficient protein synthesis under certain stress conditions. May act as a fidelity factor of the translation reaction, by catalyzing a one-codon backward translocation of tRNAs on improperly translocated ribosomes. Back-translocation proceeds from a post-translocation (POST) complex to a pre-translocation (PRE) complex, thus giving elongation factor G a second chance to translocate the tRNAs correctly. Binds to ribosomes in a GTP-dependent manner. This Citrifermentans bemidjiense (strain ATCC BAA-1014 / DSM 16622 / JCM 12645 / Bem) (Geobacter bemidjiensis) protein is Elongation factor 4.